A 259-amino-acid polypeptide reads, in one-letter code: uncharacterized protein (259 aa).

One can recognise an ABC transporter domain in the interval Ile4–Lys243. Gly36–Ser43 serves as a coordination point for ATP.

It belongs to the ABC transporter superfamily.

This is an uncharacterized protein from Lactococcus lactis subsp. lactis (strain IL1403) (Streptococcus lactis).